Here is a 189-residue protein sequence, read N- to C-terminus: SAGA-associated factor 11 homolog (189 aa).

Residues 94-115 (CTCPNCDRLVAATRFAPHLEKC) form an SGF11-type zinc finger. The interval 128-189 (RRLATKEGSS…GSKKNNGKTF (62 aa)) is disordered. Residues 136–145 (SSASSTSTST) are compositionally biased toward low complexity. Residue S165 is modified to Phosphoserine. The span at 175–189 (NSRNNGSKKNNGKTF) shows a compositional bias: low complexity.

Belongs to the SGF11 family. Component of some SAGA transcription coactivator-HAT complexes, at least composed of Ada2b, not/nonstop, Pcaf/Gcn5, Sgf11 and Spt3. Within the SAGA complex, Sgf11, e(y)2, and not/nonstop form an additional subcomplex of SAGA called the DUB module (deubiquitination module). Interacts directly with not/nonstop. Interacts with the AMEX complex component xmas-2. Interacts with Cbp80; important for promoter recruitment of Sgf11 that is not associated with the DUB module.

Its subcellular location is the nucleus. The protein localises to the nucleoplasm. It is found in the cytoplasm. In terms of biological role, component of the transcription regulatory histone acetylation (HAT) complex SAGA, a multiprotein complex that activates transcription by remodeling chromatin and mediating histone acetylation and deubiquitination. Within the SAGA complex, participates in a subcomplex that specifically deubiquitinates histone H2B. The SAGA complex is recruited to specific gene promoters by activators, where it is required for transcription. Required for nuclear receptor-mediated transactivation. Binds independently on SAGA to promoters in an RNA-dependent manner. Binds to mRNA and is essential for total mRNA export from the nucleus. Required to counteract heterochromatin silencing. Controls the development of neuronal connectivity in visual system by being required for accurate axon targeting in the optic lobe. Required for expression of ecdysone-induced genes such as br/broad. This is SAGA-associated factor 11 homolog from Drosophila virilis (Fruit fly).